The sequence spans 323 residues: Acetyl-coenzyme A carboxylase carboxyl transferase subunit alpha (323 aa).

A CoA carboxyltransferase C-terminal domain is found at 39 to 293; it reads RLSKKSQQLT…RRALADSLRQ (255 aa).

This sequence belongs to the AccA family. As to quaternary structure, acetyl-CoA carboxylase is a heterohexamer composed of biotin carboxyl carrier protein (AccB), biotin carboxylase (AccC) and two subunits each of ACCase subunit alpha (AccA) and ACCase subunit beta (AccD).

It is found in the cytoplasm. It carries out the reaction N(6)-carboxybiotinyl-L-lysyl-[protein] + acetyl-CoA = N(6)-biotinyl-L-lysyl-[protein] + malonyl-CoA. Its pathway is lipid metabolism; malonyl-CoA biosynthesis; malonyl-CoA from acetyl-CoA: step 1/1. Its function is as follows. Component of the acetyl coenzyme A carboxylase (ACC) complex. First, biotin carboxylase catalyzes the carboxylation of biotin on its carrier protein (BCCP) and then the CO(2) group is transferred by the carboxyltransferase to acetyl-CoA to form malonyl-CoA. This Burkholderia vietnamiensis (strain G4 / LMG 22486) (Burkholderia cepacia (strain R1808)) protein is Acetyl-coenzyme A carboxylase carboxyl transferase subunit alpha.